The following is a 100-amino-acid chain: ATP synthase subunit c (100 aa).

The next 2 membrane-spanning stretches (helical) occupy residues 30 to 50 (LLYLGAGLAIGLAGLGAGVGM) and 80 to 100 (AFIETIALYGLLIAFILLFVV).

The protein belongs to the ATPase C chain family. F-type ATPases have 2 components, F(1) - the catalytic core - and F(0) - the membrane proton channel. F(1) has five subunits: alpha(3), beta(3), gamma(1), delta(1), epsilon(1). F(0) has three main subunits: a(1), b(2) and c(10-14). The alpha and beta chains form an alternating ring which encloses part of the gamma chain. F(1) is attached to F(0) by a central stalk formed by the gamma and epsilon chains, while a peripheral stalk is formed by the delta and b chains.

The protein localises to the cell inner membrane. F(1)F(0) ATP synthase produces ATP from ADP in the presence of a proton or sodium gradient. F-type ATPases consist of two structural domains, F(1) containing the extramembraneous catalytic core and F(0) containing the membrane proton channel, linked together by a central stalk and a peripheral stalk. During catalysis, ATP synthesis in the catalytic domain of F(1) is coupled via a rotary mechanism of the central stalk subunits to proton translocation. Functionally, key component of the F(0) channel; it plays a direct role in translocation across the membrane. A homomeric c-ring of between 10-14 subunits forms the central stalk rotor element with the F(1) delta and epsilon subunits. This chain is ATP synthase subunit c, found in Aquifex aeolicus (strain VF5).